The chain runs to 20 residues: Ranalexin-1Cb (20 aa).

A disulfide bridge connects residues C14 and C20.

In terms of tissue distribution, expressed by the skin glands.

The protein resides in the secreted. Antibacterial activity against Gram-positive bacterium S.aureus and Gram-negative bacterium E.coli. Has activity against C.albicans. This Lithobates clamitans (Green frog) protein is Ranalexin-1Cb.